The following is a 506-amino-acid chain: GMP synthase [glutamine-hydrolyzing] (506 aa).

In terms of domain architecture, Glutamine amidotransferase type-1 spans 4 to 192 (KLIILDFGSQ…FLDICGMKRD (189 aa)). The active-site Nucleophile is Cys-79. Catalysis depends on residues His-167 and Glu-169. The GMPS ATP-PPase domain maps to 193–381 (WTPASFIEAT…LGMMPHLIHR (189 aa)). Position 220–226 (220–226 (SGGVDSS)) interacts with ATP.

Homodimer.

The catalysed reaction is XMP + L-glutamine + ATP + H2O = GMP + L-glutamate + AMP + diphosphate + 2 H(+). It participates in purine metabolism; GMP biosynthesis; GMP from XMP (L-Gln route): step 1/1. Functionally, catalyzes the synthesis of GMP from XMP. This is GMP synthase [glutamine-hydrolyzing] from Porphyromonas gingivalis (strain ATCC 33277 / DSM 20709 / CIP 103683 / JCM 12257 / NCTC 11834 / 2561).